Consider the following 359-residue polypeptide: Photosystem II protein D1 1 (359 aa).

3 helical membrane-spanning segments follow: residues Y29–I46, H118–L133, and W142–A156. H118 lines the chlorophyll a pocket. A pheophytin a-binding site is contributed by Y126. D170 and E189 together coordinate [CaMn4O5] cluster. The helical transmembrane segment at F197 to L218 threads the bilayer. Residue H198 coordinates chlorophyll a. Residues H215 and S264 to F265 contribute to the a quinone site. H215 lines the Fe cation pocket. H272 lines the Fe cation pocket. The chain crosses the membrane as a helical span at residues F274 to L288. [CaMn4O5] cluster is bound by residues H332, E333, D342, and A344. Residues A345–G359 constitute a propeptide that is removed on maturation.

Belongs to the reaction center PufL/M/PsbA/D family. PSII is composed of 1 copy each of membrane proteins PsbA, PsbB, PsbC, PsbD, PsbE, PsbF, PsbH, PsbI, PsbJ, PsbK, PsbL, PsbM, PsbT, PsbX, PsbY, PsbZ, Psb30/Ycf12, peripheral proteins PsbO, CyanoQ (PsbQ), PsbU, PsbV and a large number of cofactors. It forms dimeric complexes. The cofactor is The D1/D2 heterodimer binds P680, chlorophylls that are the primary electron donor of PSII, and subsequent electron acceptors. It shares a non-heme iron and each subunit binds pheophytin, quinone, additional chlorophylls, carotenoids and lipids. D1 provides most of the ligands for the Mn4-Ca-O5 cluster of the oxygen-evolving complex (OEC). There is also a Cl(-1) ion associated with D1 and D2, which is required for oxygen evolution. The PSII complex binds additional chlorophylls, carotenoids and specific lipids.. Tyr-161 forms a radical intermediate that is referred to as redox-active TyrZ, YZ or Y-Z. Post-translationally, C-terminally processed by CtpA; processing is essential to allow assembly of the oxygen-evolving complex and thus photosynthetic growth.

The protein resides in the cellular thylakoid membrane. The enzyme catalyses 2 a plastoquinone + 4 hnu + 2 H2O = 2 a plastoquinol + O2. Functionally, photosystem II (PSII) is a light-driven water:plastoquinone oxidoreductase that uses light energy to abstract electrons from H(2)O, generating O(2) and a proton gradient subsequently used for ATP formation. It consists of a core antenna complex that captures photons, and an electron transfer chain that converts photonic excitation into a charge separation. The D1/D2 (PsbA/PsbD) reaction center heterodimer binds P680, the primary electron donor of PSII as well as several subsequent electron acceptors. The polypeptide is Photosystem II protein D1 1 (Synechococcus sp. (strain CC9605)).